The sequence spans 152 residues: Xanthine-guanine phosphoribosyltransferase (152 aa).

5-phospho-alpha-D-ribose 1-diphosphate-binding positions include 37–38 and 88–96; these read RG and DDLVDTGNT. A Mg(2+)-binding site is contributed by aspartate 89. 2 residues coordinate guanine: aspartate 92 and isoleucine 135. Xanthine contacts are provided by aspartate 92 and isoleucine 135. GMP contacts are provided by residues 92–96 and 134–135; these read DTGNT and WI.

It belongs to the purine/pyrimidine phosphoribosyltransferase family. XGPT subfamily. In terms of assembly, homotetramer. Mg(2+) is required as a cofactor.

It is found in the cell inner membrane. The enzyme catalyses GMP + diphosphate = guanine + 5-phospho-alpha-D-ribose 1-diphosphate. The catalysed reaction is XMP + diphosphate = xanthine + 5-phospho-alpha-D-ribose 1-diphosphate. It catalyses the reaction IMP + diphosphate = hypoxanthine + 5-phospho-alpha-D-ribose 1-diphosphate. Its pathway is purine metabolism; GMP biosynthesis via salvage pathway; GMP from guanine: step 1/1. It functions in the pathway purine metabolism; XMP biosynthesis via salvage pathway; XMP from xanthine: step 1/1. Functionally, purine salvage pathway enzyme that catalyzes the transfer of the ribosyl-5-phosphate group from 5-phospho-alpha-D-ribose 1-diphosphate (PRPP) to the N9 position of the 6-oxopurines guanine and xanthine to form the corresponding ribonucleotides GMP (guanosine 5'-monophosphate) and XMP (xanthosine 5'-monophosphate), with the release of PPi. To a lesser extent, also acts on hypoxanthine. The protein is Xanthine-guanine phosphoribosyltransferase of Actinobacillus succinogenes (strain ATCC 55618 / DSM 22257 / CCUG 43843 / 130Z).